Reading from the N-terminus, the 489-residue chain is UDP-glycosyltransferase 85A1 (489 aa).

UDP-alpha-D-glucose is bound by residues Ser307, 364–366 (CPQ), 381–389 (HCGWNSILE), and 403–406 (FADQ).

It belongs to the UDP-glycosyltransferase family. In terms of tissue distribution, expressed in root tips, lateral root initials, root apex, shoots, leaf periphery, leaf primordia and flowers.

Functionally, involved in the O-glucosylation of trans-zeatin and dihydrozeatin. Also active in vitro on cis-zeatin. Not active on N-glucosylated substrates. The protein is UDP-glycosyltransferase 85A1 (UGT85A1) of Arabidopsis thaliana (Mouse-ear cress).